A 561-amino-acid chain; its full sequence is Asparagine synthetase [glutamine-hydrolyzing] (561 aa).

Cysteine 2 (for GATase activity) is an active-site residue. The region spanning 2 to 191 (CGIWALFGSD…PGHYEVLDLK (190 aa)) is the Glutamine amidotransferase type-2 domain. Residues 49–53 (RLAVV), 75–77 (NGE), and aspartate 97 contribute to the L-glutamine site. The Asparagine synthetase domain occupies 213-536 (HAIYDSVEKL…PGRADWLTHY (324 aa)). ATP contacts are provided by residues leucine 256, isoleucine 288, and 363 to 364 (SG). N6-acetyllysine is present on lysine 385. At threonine 545 the chain carries Phosphothreonine. At serine 557 the chain carries Phosphoserine.

It catalyses the reaction L-aspartate + L-glutamine + ATP + H2O = L-asparagine + L-glutamate + AMP + diphosphate + H(+). It functions in the pathway amino-acid biosynthesis; L-asparagine biosynthesis; L-asparagine from L-aspartate (L-Gln route): step 1/1. The chain is Asparagine synthetase [glutamine-hydrolyzing] (Asns) from Rattus norvegicus (Rat).